The chain runs to 568 residues: Methionine--tRNA ligase (568 aa).

Residues 10–20 carry the 'HIGH' region motif; that stretch reads PYVQSVPHLGN. Zn(2+)-binding residues include cysteine 143, cysteine 146, cysteine 156, and cysteine 159. The short motif at 333-337 is the 'KMSKS' region element; the sequence is KFSKS. Residue lysine 336 participates in ATP binding.

It belongs to the class-I aminoacyl-tRNA synthetase family. MetG type 1 subfamily. Requires Zn(2+) as cofactor.

The protein localises to the cytoplasm. The catalysed reaction is tRNA(Met) + L-methionine + ATP = L-methionyl-tRNA(Met) + AMP + diphosphate. Its function is as follows. Is required not only for elongation of protein synthesis but also for the initiation of all mRNA translation through initiator tRNA(fMet) aminoacylation. The chain is Methionine--tRNA ligase from Metallosphaera sedula (strain ATCC 51363 / DSM 5348 / JCM 9185 / NBRC 15509 / TH2).